Here is a 100-residue protein sequence, read N- to C-terminus: Coiled-coil domain-containing protein 167 (100 aa).

The stretch at 14–81 (VASEIDRVEE…VLRGENRRNM (68 aa)) forms a coiled coil. The chain crosses the membrane as a helical span at residues 82–99 (MLSVALLAISALFYYTFI).

Its subcellular location is the membrane. This chain is Coiled-coil domain-containing protein 167 (ccdc167), found in Danio rerio (Zebrafish).